Consider the following 119-residue polypeptide: Ribonuclease P protein component (119 aa).

It belongs to the RnpA family. Consists of a catalytic RNA component (M1 or rnpB) and a protein subunit.

The catalysed reaction is Endonucleolytic cleavage of RNA, removing 5'-extranucleotides from tRNA precursor.. Its function is as follows. RNaseP catalyzes the removal of the 5'-leader sequence from pre-tRNA to produce the mature 5'-terminus. It can also cleave other RNA substrates such as 4.5S RNA. The protein component plays an auxiliary but essential role in vivo by binding to the 5'-leader sequence and broadening the substrate specificity of the ribozyme. In Bacillus cereus (strain ATCC 14579 / DSM 31 / CCUG 7414 / JCM 2152 / NBRC 15305 / NCIMB 9373 / NCTC 2599 / NRRL B-3711), this protein is Ribonuclease P protein component.